The primary structure comprises 460 residues: tRNA (guanine(10)-N(2))-methyltransferase TRMT11 (460 aa).

An N-acetylalanine modification is found at Ala-2.

The protein belongs to the class I-like SAM-binding methyltransferase superfamily. TRM11 methyltransferase family. In terms of assembly, part of the heterodimeric TRMT11-TRM112 methyltransferase complex; this complex forms an active tRNA methyltransferase, where TRMT112 acts as an activator of the catalytic subunit TRMT11.

Its subcellular location is the cytoplasm. The catalysed reaction is guanosine(10) in tRNA + S-adenosyl-L-methionine = N(2)-methylguanosine(10) in tRNA + S-adenosyl-L-homocysteine + H(+). Functionally, catalytic subunit of the TRMT11-TRM112 methyltransferase complex, that specifically mediates the S-adenosyl-L-methionine-dependent N(2)-methylation of guanosine nucleotide at position 10 (m2G10) in tRNAs. This is one of the major tRNA (guanine-N(2))-methyltransferases. This Mus musculus (Mouse) protein is tRNA (guanine(10)-N(2))-methyltransferase TRMT11.